We begin with the raw amino-acid sequence, 515 residues long: Zinc-binding protein AdcA (515 aa).

Positions Met1–Ala28 are cleaved as a signal peptide. Zn(2+) is bound at residue His66. A disordered region spans residues His126 to Ala148. Residues Glu129–Ala148 form a his-rich loop region. Zn(2+) is bound by residues His152, His216, and Glu291.

This sequence belongs to the bacterial solute-binding protein 9 family.

Part of the ATP-binding cassette (ABC) transport system AdcABC involved in zinc import. Binds zinc with high affinity and specificity and delivers it to the membrane permease for translocation into the cytoplasm. This chain is Zinc-binding protein AdcA (adcA), found in Streptococcus pyogenes serotype M3 (strain ATCC BAA-595 / MGAS315).